We begin with the raw amino-acid sequence, 169 residues long: Disulfide bond formation protein B (169 aa).

Residues 1 to 13 lie on the Cytoplasmic side of the membrane; the sequence is MQSLISFAHSRLS. A helical transmembrane segment spans residues 14 to 30; that stretch reads WGILALSALALESAALY. Over 31 to 48 the chain is Periplasmic; it reads FQHIMKLDPCVMCIYQRV. Cysteine 40 and cysteine 43 are joined by a disulfide. The helical transmembrane segment at 49 to 64 threads the bilayer; that stretch reads AVFGLLGAGLFGFMAP. The Cytoplasmic segment spans residues 65-71; that stretch reads ANRVIRA. Residues 72 to 89 traverse the membrane as a helical segment; that stretch reads LGALLWGISAAWGLKLAL. Over 90–144 the chain is Periplasmic; the sequence is ELVDMQNNPNPFSTCSFLPEFPSWLQLHEWLPSVFMPTGMCTDIPWEFAGVTMGE. Cysteines 104 and 130 form a disulfide. The chain crosses the membrane as a helical span at residues 145–163; sequence WMIVAFSVYLLAWLAFIVP. Topologically, residues 164-169 are cytoplasmic; that stretch reads MLKKSA.

It belongs to the DsbB family.

The protein resides in the cell inner membrane. Required for disulfide bond formation in some periplasmic proteins. Acts by oxidizing the DsbA protein. The polypeptide is Disulfide bond formation protein B (Shewanella amazonensis (strain ATCC BAA-1098 / SB2B)).